The primary structure comprises 547 residues: Eukaryotic translation initiation factor 3 subunit D (547 aa).

2 disordered regions span residues 1 to 22 and 114 to 159; these read MANF…PSTS and SVRG…TRDS. Positions 126 to 148 are enriched in gly residues; sequence GRGGQRGGFSTRGGRGGARGGYG. The interval 284 to 298 is RNA gate; sequence PLDYITVNENAADPP.

Belongs to the eIF-3 subunit D family. Component of the eukaryotic translation initiation factor 3 (eIF-3) complex.

It is found in the cytoplasm. MRNA cap-binding component of the eukaryotic translation initiation factor 3 (eIF-3) complex, which is involved in protein synthesis of a specialized repertoire of mRNAs and, together with other initiation factors, stimulates binding of mRNA and methionyl-tRNAi to the 40S ribosome. The eIF-3 complex specifically targets and initiates translation of a subset of mRNAs involved in cell proliferation. In the eIF-3 complex, eif3d specifically recognizes and binds the 7-methylguanosine cap of a subset of mRNAs. In Cryptococcus neoformans var. neoformans serotype D (strain B-3501A) (Filobasidiella neoformans), this protein is Eukaryotic translation initiation factor 3 subunit D.